A 69-amino-acid chain; its full sequence is ATP synthase F(0) complex subunit e, mitochondrial (69 aa).

An N6-acetyllysine modification is found at Lys34.

Belongs to the ATPase e subunit family. Component of the ATP synthase complex composed at least of ATP5F1A/subunit alpha, ATP5F1B/subunit beta, ATP5MC1/subunit c (homooctomer), MT-ATP6/subunit a, MT-ATP8/subunit 8, ATP5ME/subunit e, ATP5MF/subunit f, ATP5MG/subunit g, ATP5MK/subunit k, ATP5MJ/subunit j, ATP5F1C/subunit gamma, ATP5F1D/subunit delta, ATP5F1E/subunit epsilon, ATP5PF/subunit F6, ATP5PB/subunit b, ATP5PD/subunit d, ATP5PO/subunit OSCP. ATP synthase complex consists of a soluble F(1) head domain (subunits alpha(3) and beta(3)) - the catalytic core - and a membrane F(0) domain - the membrane proton channel (subunits c, a, 8, e, f, g, k and j). These two domains are linked by a central stalk (subunits gamma, delta, and epsilon) rotating inside the F1 region and a stationary peripheral stalk (subunits F6, b, d, and OSCP).

It localises to the mitochondrion. Its subcellular location is the mitochondrion inner membrane. Subunit e, of the mitochondrial membrane ATP synthase complex (F(1)F(0) ATP synthase or Complex V) that produces ATP from ADP in the presence of a proton gradient across the membrane which is generated by electron transport complexes of the respiratory chain. ATP synthase complex consist of a soluble F(1) head domain - the catalytic core - and a membrane F(1) domain - the membrane proton channel. These two domains are linked by a central stalk rotating inside the F(1) region and a stationary peripheral stalk. During catalysis, ATP synthesis in the catalytic domain of F(1) is coupled via a rotary mechanism of the central stalk subunits to proton translocation. In vivo, can only synthesize ATP although its ATP hydrolase activity can be activated artificially in vitro. Part of the complex F(0) domain. In Cricetulus longicaudatus (Long-tailed dwarf hamster), this protein is ATP synthase F(0) complex subunit e, mitochondrial.